Consider the following 420-residue polypeptide: MKNALLNLSLLTSSVWSPISGGITAPDGFLAAGISAGLKPSGKKDLALLYAPDGACCSGTFTQSVTRAYCVDLCIDRIKASEGKIRAVVINSGHANACTGSRGKIDSEMITHKLAQLLRLSSEEVLICSTGVIGEAIPVEKVNSHLDQLINSLDKEAYLDAANAILTTDLQVKQIAYQAVLGGRRISIGGMAKGSGMIHPSMATMLSYLTCDVGVDHVLWSDMIKRVAESSFNSITVDGDTSTNDTFLAFASGAELDPRYLSILEEGLHLTAQHLAKSIARDGEGANCLLEIKVEGASSDLDARAIARTIASSSLVKTAVHGSDPNWGRIIAALGRAGTSFNLNDVKLWIGPYEIFSNGTPLDFDRQIVSNFMKARLTGKYLIDDLISIRLRIGIGTGSATAWGCDLSDQYVRINADYTT.

Residues T167, K193, T204, E284, N415, and T420 each contribute to the substrate site. Residue T204 is the Nucleophile of the active site.

This sequence belongs to the ArgJ family. As to quaternary structure, heterotetramer of two alpha and two beta chains.

The protein localises to the cytoplasm. The catalysed reaction is N(2)-acetyl-L-ornithine + L-glutamate = N-acetyl-L-glutamate + L-ornithine. It carries out the reaction L-glutamate + acetyl-CoA = N-acetyl-L-glutamate + CoA + H(+). Its pathway is amino-acid biosynthesis; L-arginine biosynthesis; L-ornithine and N-acetyl-L-glutamate from L-glutamate and N(2)-acetyl-L-ornithine (cyclic): step 1/1. It functions in the pathway amino-acid biosynthesis; L-arginine biosynthesis; N(2)-acetyl-L-ornithine from L-glutamate: step 1/4. In terms of biological role, catalyzes two activities which are involved in the cyclic version of arginine biosynthesis: the synthesis of N-acetylglutamate from glutamate and acetyl-CoA as the acetyl donor, and of ornithine by transacetylation between N(2)-acetylornithine and glutamate. The protein is Arginine biosynthesis bifunctional protein ArgJ of Prochlorococcus marinus (strain NATL2A).